A 122-amino-acid chain; its full sequence is Protein C10 (122 aa).

This sequence belongs to the UPF0456 family.

Its subcellular location is the cytoplasm. The chain is Protein C10 from Danio rerio (Zebrafish).